The sequence spans 396 residues: Elongation factor Tu (396 aa).

Residues 10–206 (KPHVNVGTIG…ALDTYIPTPE (197 aa)) form the tr-type G domain. Residues 19 to 26 (GHVDHGKT) are G1. 19-26 (GHVDHGKT) contacts GTP. Thr26 is a binding site for Mg(2+). The segment at 60 to 64 (GITIN) is G2. The interval 81 to 84 (DCPG) is G3. GTP is bound by residues 81–85 (DCPGH) and 136–139 (NKCD). Residues 136–139 (NKCD) form a G4 region. A G5 region spans residues 174 to 176 (SAK).

Belongs to the TRAFAC class translation factor GTPase superfamily. Classic translation factor GTPase family. EF-Tu/EF-1A subfamily. Monomer.

It is found in the cytoplasm. The catalysed reaction is GTP + H2O = GDP + phosphate + H(+). Its function is as follows. GTP hydrolase that promotes the GTP-dependent binding of aminoacyl-tRNA to the A-site of ribosomes during protein biosynthesis. This Burkholderia cepacia (Pseudomonas cepacia) protein is Elongation factor Tu.